A 418-amino-acid chain; its full sequence is NADH-quinone oxidoreductase subunit D (418 aa).

This sequence belongs to the complex I 49 kDa subunit family. NDH-1 is composed of 14 different subunits. Subunits NuoB, C, D, E, F, and G constitute the peripheral sector of the complex.

The protein resides in the cell inner membrane. It catalyses the reaction a quinone + NADH + 5 H(+)(in) = a quinol + NAD(+) + 4 H(+)(out). Its function is as follows. NDH-1 shuttles electrons from NADH, via FMN and iron-sulfur (Fe-S) centers, to quinones in the respiratory chain. The immediate electron acceptor for the enzyme in this species is believed to be ubiquinone. Couples the redox reaction to proton translocation (for every two electrons transferred, four hydrogen ions are translocated across the cytoplasmic membrane), and thus conserves the redox energy in a proton gradient. In Neisseria meningitidis serogroup C / serotype 2a (strain ATCC 700532 / DSM 15464 / FAM18), this protein is NADH-quinone oxidoreductase subunit D.